Consider the following 154-residue polypeptide: Large ribosomal subunit protein uL13 (154 aa).

Belongs to the universal ribosomal protein uL13 family. Part of the 50S ribosomal subunit.

This protein is one of the early assembly proteins of the 50S ribosomal subunit, although it is not seen to bind rRNA by itself. It is important during the early stages of 50S assembly. This is Large ribosomal subunit protein uL13 from Bartonella quintana (strain Toulouse) (Rochalimaea quintana).